The chain runs to 57 residues: Large ribosomal subunit protein bL32 (57 aa).

The tract at residues 1-23 (MAVPKKKTSKSKRDKRRATWRHK) is disordered.

This sequence belongs to the bacterial ribosomal protein bL32 family.

The polypeptide is Large ribosomal subunit protein bL32 (Nostoc sp. (strain PCC 7120 / SAG 25.82 / UTEX 2576)).